A 220-amino-acid polypeptide reads, in one-letter code: Uracil-DNA glycosylase 1 (220 aa).

Aspartate 65 (proton acceptor) is an active-site residue.

This sequence belongs to the uracil-DNA glycosylase (UDG) superfamily. UNG family.

The protein localises to the cytoplasm. It catalyses the reaction Hydrolyzes single-stranded DNA or mismatched double-stranded DNA and polynucleotides, releasing free uracil.. Functionally, excises uracil residues from the DNA which can arise as a result of misincorporation of dUMP residues by DNA polymerase or due to deamination of cytosine. The chain is Uracil-DNA glycosylase 1 from Bacteroides fragilis (strain ATCC 25285 / DSM 2151 / CCUG 4856 / JCM 11019 / LMG 10263 / NCTC 9343 / Onslow / VPI 2553 / EN-2).